Reading from the N-terminus, the 457-residue chain is Probable ATP-dependent RNA helicase DDX47 (457 aa).

Position 2 is an N-acetylalanine (A2). S9 carries the post-translational modification Phosphoserine. Positions 26 to 54 match the Q motif motif; sequence KTFKDLGVTDVLCEACDQLGWTKPTKIQI. Positions 57-228 constitute a Helicase ATP-binding domain; sequence IPLALQGRDI…RAALKNPVKC (172 aa). Residue 70–77 participates in ATP binding; sequence AETGSGKT. Residue T151 is modified to Phosphothreonine. Positions 176-179 match the DEAD box motif; it reads DEAD. The Helicase C-terminal domain maps to 239 to 399; that stretch reads KLQQYYLFIP…VFPTQDDEVM (161 aa). A compositionally biased stretch (basic and acidic residues) spans 415–430; sequence ELREHGEKKKRSREDV. The interval 415–457 is disordered; it reads ELREHGEKKKRSREDVGDNDDTEGAIGVRNKVAGGKMKKRKGR. S426 bears the Phosphoserine mark.

This sequence belongs to the DEAD box helicase family. DDX47/RRP3 subfamily. Interacts with AGO1 and AGO2. Interacts with GABARAP. Interacts with NOL8; the interaction is RNA-dependent.

It is found in the nucleus. The protein resides in the nucleolus. It carries out the reaction ATP + H2O = ADP + phosphate + H(+). Involved in apoptosis. May have a role in rRNA processing and mRNA splicing. Associates with pre-rRNA precursors. The chain is Probable ATP-dependent RNA helicase DDX47 (DDX47) from Bos taurus (Bovine).